A 1406-amino-acid chain; its full sequence is Inactive tyrosine-protein kinase PRAG1 (1406 aa).

At Ser148 the chain carries Phosphoserine. Residues 184-193 (EEKAVHKEKP) show a composition bias toward basic and acidic residues. Disordered stretches follow at residues 184–205 (EEKA…STQE) and 217–248 (TTSG…SGDS). Tyr253, Tyr365, and Tyr413 each carry phosphotyrosine. Disordered stretches follow at residues 372–470 (PAPE…TPQV) and 484–854 (DHRT…HSET). The span at 526–542 (RESHAHSASESKPKERP) shows a compositional bias: basic and acidic residues. Low complexity predominate over residues 546–576 (PKLSKSSPVGSPVSPSAGGPPVSPLADLSDG). Polar residues-rich tracts occupy residues 660–671 (NGPTDHSNSTTW) and 678–695 (DGSS…SKSA). Phosphoserine occurs at positions 696 and 745. Composition is skewed to polar residues over residues 737–746 (SQGSAESLSP) and 754–770 (SFTT…SRTC). Ser782 bears the Phosphoserine mark. Positions 798 to 808 (SGSTEDVSPSG) are enriched in polar residues. The residue at position 826 (Ser826) is a Phosphoserine. Residues 933 to 976 (STQLQLHGLLSNISSKEGTYAKLGGLYTQSLARLVAKCEDLFMG) are required for homodimerization. Residues 978-1329 (QKKELHFNEN…EAKRVLQCLL (352 aa)) form the Protein kinase domain. A compositionally biased stretch (pro residues) spans 1163 to 1173 (GPAPAPAPAPA). The interval 1163 to 1206 (GPAPAPAPAPAPAAAAPPCSSAAPPAGGTLSPAAGPASPEGPRE) is disordered. The segment covering 1174–1202 (PAAAAPPCSSAAPPAGGTLSPAAGPASPE) has biased composition (low complexity). Residues 1331–1406 (GPRRELVQQP…LQSLKLLQLL (76 aa)) form a required for homodimerization region.

Belongs to the protein kinase superfamily. Homodimer. Dimerization leads to the catalytic activation of CSK. Interacts (via C-terminus) with RND2. Interacts with CSK (via SH2 domain) in a Tyr-413 phosphorylation-dependent manner; this interaction potentiates kinase activity of CSK. Interacts with PEAK1. Interacts with NOTCH1 intracellular domain (N1ICD). Forms a complex with N1ICD and MAML1, in a MAML1-dependent manner. Post-translationally, phosphorylated by CSK on Tyr-253, Tyr-365, and Tyr-413; Tyr-413 is a primary site of phosphorylation.

It localises to the cytoplasm. The protein localises to the cell junction. It is found in the focal adhesion. Its subcellular location is the nucleus. Functionally, catalytically inactive protein kinase that acts as a scaffold protein. Functions as an effector of the small GTPase RND2, which stimulates RhoA activity and inhibits NGF-induced neurite outgrowth. Promotes Src family kinase (SFK) signaling by regulating the subcellular localization of CSK, a negative regulator of these kinases, leading to the regulation of cell morphology and motility by a CSK-dependent mechanism. Acts as a critical coactivator of Notch signaling. The sequence is that of Inactive tyrosine-protein kinase PRAG1 from Homo sapiens (Human).